We begin with the raw amino-acid sequence, 443 residues long: 23S rRNA (uracil(1939)-C(5))-methyltransferase RlmD (443 aa).

The TRAM domain occupies 12 to 70 (AKKLSQKIALKVQRLDHLGAGIAEHQGKVVFIPGALPGETVEVQLTEQKKNYARAKLQR). [4Fe-4S] cluster-binding residues include Cys-83, Cys-89, Cys-92, and Cys-171. S-adenosyl-L-methionine-binding residues include Gln-276, Phe-305, Asn-310, Glu-326, Asp-353, and Asp-373. Cys-399 serves as the catalytic Nucleophile.

This sequence belongs to the class I-like SAM-binding methyltransferase superfamily. RNA M5U methyltransferase family. RlmD subfamily.

The catalysed reaction is uridine(1939) in 23S rRNA + S-adenosyl-L-methionine = 5-methyluridine(1939) in 23S rRNA + S-adenosyl-L-homocysteine + H(+). Functionally, catalyzes the formation of 5-methyl-uridine at position 1939 (m5U1939) in 23S rRNA. This Shewanella amazonensis (strain ATCC BAA-1098 / SB2B) protein is 23S rRNA (uracil(1939)-C(5))-methyltransferase RlmD.